The sequence spans 344 residues: tRNA(Ile)-lysidine synthase (344 aa).

30 to 35 contributes to the ATP binding site; sequence SGGQDS. Residues 323 to 344 form a disordered region; sequence PPPPAPVPPDPGERSPPPSPLY.

It belongs to the tRNA(Ile)-lysidine synthase family.

Its subcellular location is the cytoplasm. The catalysed reaction is cytidine(34) in tRNA(Ile2) + L-lysine + ATP = lysidine(34) in tRNA(Ile2) + AMP + diphosphate + H(+). Functionally, ligates lysine onto the cytidine present at position 34 of the AUA codon-specific tRNA(Ile) that contains the anticodon CAU, in an ATP-dependent manner. Cytidine is converted to lysidine, thus changing the amino acid specificity of the tRNA from methionine to isoleucine. This chain is tRNA(Ile)-lysidine synthase, found in Thermosynechococcus vestitus (strain NIES-2133 / IAM M-273 / BP-1).